The primary structure comprises 480 residues: Protein nucleotidyltransferase YdiU (480 aa).

ATP is bound by residues Gly86, Gly88, Arg89, Lys109, Asp121, Gly122, Arg172, and Arg179. Asp248 acts as the Proton acceptor in catalysis. Mg(2+)-binding residues include Asn249 and Asp258. Asp258 is a binding site for ATP.

It belongs to the SELO family. Requires Mg(2+) as cofactor. Mn(2+) is required as a cofactor.

The enzyme catalyses L-seryl-[protein] + ATP = 3-O-(5'-adenylyl)-L-seryl-[protein] + diphosphate. It catalyses the reaction L-threonyl-[protein] + ATP = 3-O-(5'-adenylyl)-L-threonyl-[protein] + diphosphate. It carries out the reaction L-tyrosyl-[protein] + ATP = O-(5'-adenylyl)-L-tyrosyl-[protein] + diphosphate. The catalysed reaction is L-histidyl-[protein] + UTP = N(tele)-(5'-uridylyl)-L-histidyl-[protein] + diphosphate. The enzyme catalyses L-seryl-[protein] + UTP = O-(5'-uridylyl)-L-seryl-[protein] + diphosphate. It catalyses the reaction L-tyrosyl-[protein] + UTP = O-(5'-uridylyl)-L-tyrosyl-[protein] + diphosphate. Nucleotidyltransferase involved in the post-translational modification of proteins. It can catalyze the addition of adenosine monophosphate (AMP) or uridine monophosphate (UMP) to a protein, resulting in modifications known as AMPylation and UMPylation. This is Protein nucleotidyltransferase YdiU from Salmonella choleraesuis (strain SC-B67).